A 113-amino-acid chain; its full sequence is MMKRLVVLRRREPAVRFSCCGVRYGECRRNHAASTGGHAVDGCREFIAAEDGGGGNSTGAVGVAAAALKCAACGCHRSFHRRVQVYEVAWDDDCDSGDTSSSSPSSSSSLSSE.

The ZF-HD dimerization-type; degenerate zinc finger occupies 24–83; it reads YGECRRNHAASTGGHAVDGCREFIAAEDGGGGNSTGAVGVAAAALKCAACGCHRSFHRRV. The segment at 93-113 is disordered; the sequence is DCDSGDTSSSSPSSSSSLSSE. Positions 97–113 are enriched in low complexity; it reads GDTSSSSPSSSSSLSSE.

In terms of assembly, homo- and heterodimers.

The protein resides in the cytoplasm. In terms of biological role, inhibits zinc finger homeodomain (ZHD) transcription factors, by interacting with them to prevent both their nuclear localization and their DNA-binding properties. The polypeptide is Mini zinc finger protein 3 (MIF3) (Oryza sativa subsp. indica (Rice)).